Here is a 232-residue protein sequence, read N- to C-terminus: MIDRKPFDKLGGADHGWLKAKHHFSFASYYDPNNMNWGALRVWNDDEIAPNTGFPPHPHSDMEIITYVRDGAITHQDNLGNKGRTVAGDVQVMSAGSGIRHAEYNLEPETTRIFQIWIEPKSFGGAPSWGSKPFPKGDRSGKFVTLASGFSDDADALPIRTDARVLGATLKAGETTTYALGKDRSGYLVPAAGVVEVNGVRLNARDGAGIKDEAVITITALEDAELVLVDAA.

Belongs to the pirin family.

The chain is Pirin-like protein CC_1473 from Caulobacter vibrioides (strain ATCC 19089 / CIP 103742 / CB 15) (Caulobacter crescentus).